The chain runs to 125 residues: Fluoride-specific ion channel FluC (125 aa).

4 helical membrane passes run 4–24 (ILLV…VGLW), 32–52 (AFPW…GFLA), 68–88 (FLIT…LDAI), and 100–120 (LAYI…GLAL). The Na(+) site is built by Gly75 and Thr78.

This sequence belongs to the fluoride channel Fluc/FEX (TC 1.A.43) family.

It localises to the cell inner membrane. It carries out the reaction fluoride(in) = fluoride(out). Its activity is regulated as follows. Na(+) is not transported, but it plays an essential structural role and its presence is essential for fluoride channel function. Functionally, fluoride-specific ion channel. Important for reducing fluoride concentration in the cell, thus reducing its toxicity. The sequence is that of Fluoride-specific ion channel FluC from Rhizobium meliloti (strain 1021) (Ensifer meliloti).